The primary structure comprises 204 residues: Somatotropin (204 aa).

The N-terminal stretch at 1-17 (MDRAILLLSVVCLVVSS) is a signal peptide. A Pyrrolidone carboxylic acid modification is found at Q18. Position 36 (H36) interacts with Zn(2+). C69 and C177 are joined by a disulfide. A Zn(2+)-binding site is contributed by E186. C194 and C202 form a disulfide bridge.

It belongs to the somatotropin/prolactin family.

It is found in the secreted. Its function is as follows. Growth hormone plays an important role in growth control and is involved in the regulation of several anabolic processes. Implicated as an osmoregulatory substance important for seawater adaptation. In Odontesthes argentinensis (Marine silverside), this protein is Somatotropin (gh).